Reading from the N-terminus, the 262-residue chain is Transcription factor Spi-B (262 aa).

A TAD1 (Acidic) region spans residues 1 to 31 (MLALEAAQLDGPHFSCLYPDGVFYDLDSCKH). Positions 41–61 (PDSLWDWTVAPPVPATPYEAF) are TAD2. A disordered region spans residues 140–163 (ALEVSDSESDEALVAGPEGKGSEA). Residues 169-252 (LRLYQFLLGL…VKRKLTYQFD (84 aa)) constitute a DNA-binding region (ETS).

It belongs to the ETS family. As to quaternary structure, can form homotypic interactions. Interacts with IRF4/Pip. Interacts with JUN. Interacts with TBP. May also interact with CREBBP and EP300. Interacts with NONO/p54(nrb). As to expression, expressed in plasmacytoid dendritic cells (pDCs) and B-cells, not expressed in T-cells or granulocytes. May also be enriched in stem cell populations of the liver.

It is found in the nucleus. Its subcellular location is the cytoplasm. Functionally, sequence specific transcriptional activator which binds to the PU-box, a purine-rich DNA sequence (5'-GAGGAA-3') that can act as a lymphoid-specific enhancer. Promotes development of plasmacytoid dendritic cells (pDCs), also known as type 2 DC precursors (pre-DC2) or natural interferon (IFN)-producing cells. These cells have the capacity to produce large amounts of interferon and block viral replication. May be required for B-cell receptor (BCR) signaling, which is necessary for normal B-cell development and antigenic stimulation. The chain is Transcription factor Spi-B (SPIB) from Homo sapiens (Human).